The chain runs to 448 residues: Chaperone SurA (448 aa).

Positions 1–27 are cleaved as a signal peptide; it reads MKKTLRFAAVASGLVASLITVAPSASA. PpiC domains follow at residues 185–288 and 301–399; these read QQDL…RLVE and IVQT…QVLG.

The protein localises to the periplasm. It carries out the reaction [protein]-peptidylproline (omega=180) = [protein]-peptidylproline (omega=0). Chaperone involved in the correct folding and assembly of outer membrane proteins. Recognizes specific patterns of aromatic residues and the orientation of their side chains, which are found more frequently in integral outer membrane proteins. May act in both early periplasmic and late outer membrane-associated steps of protein maturation. This is Chaperone SurA from Burkholderia mallei (strain ATCC 23344).